Consider the following 396-residue polypeptide: Septu protein PtuA (396 aa).

In terms of biological role, component of antiviral defense system Septu type I, composed of PtuA and PtuB. Expression of Septu type I in B.subtilis (strain BEST7003) confers resistance to phages SBSphiC and SBSphiJ. May be an ATPase. This is Septu protein PtuA from Bacillus thuringiensis.